The following is a 1151-amino-acid chain: ATP-dependent RNA helicase ddx46 (1151 aa).

2 stretches are compositionally biased toward basic and acidic residues: residues 1–26 and 35–51; these read MDEY…DNRN and YRDD…DRSH. Disordered regions lie at residues 1 to 138, 166 to 224, 287 to 358, and 424 to 449; these read MDEY…SRFD, MYQQ…VFQQ, QELK…PLVN, and TSQM…DKTI. The span at 52–73 shows a compositional bias: low complexity; that stretch reads YNNNNNNNNNNNNNNNNNNGNG. Positions 81–90 are enriched in polar residues; it reads SSQNKYQNHH. 4 stretches are compositionally biased toward low complexity: residues 91–124, 166–199, 207–224, and 291–339; these read QQSP…QPHI, MYQQ…FQHH, QPPV…VFQQ, and ASGS…TTSP. The span at 428-443 shows a compositional bias: acidic residues; it reads IDDDEKLEEESEGEDD. The short motif at 509–537 is the Q motif element; that stretch reads QSWAQAGLTEKVHLLLKKFQYEKPTSIQA. The Helicase ATP-binding domain maps to 540–718; that stretch reads IPAIMNGRDL…KKILNKPLEI (179 aa). 553–560 contributes to the ATP binding site; it reads ARTGSGKT. The DEAD box motif lies at 666–669; the sequence is DEAD. One can recognise a Helicase C-terminal domain in the interval 729-890; it reads DIEQFVEVRP…KVPDELRKLN (162 aa). The disordered stretch occupies residues 904–972; it reads LLAPTGFTGR…EKEKQLLSEK (69 aa). Residues 915 to 930 show a composition bias toward basic and acidic residues; it reads HKFDAAEEDKKNIERK. The segment covering 938–948 has biased composition (acidic residues); sequence IEEEEEEEDED. A compositionally biased stretch (basic and acidic residues) spans 949-972; the sequence is KEKAEKEKLAAASAEKEKQLLSEK.

Belongs to the DEAD box helicase family. DDX46/PRP5 subfamily. In terms of assembly, component of the 17S U2 SnRNP complex, a ribonucleoprotein complex that contains small nuclear RNA (snRNA) U2 and a number of specific proteins.

It is found in the nucleus speckle. It catalyses the reaction ATP + H2O = ADP + phosphate + H(+). Its function is as follows. Component of the 17S U2 SnRNP complex of the spliceosome, a large ribonucleoprotein complex that removes introns from transcribed pre-mRNAs. The protein is ATP-dependent RNA helicase ddx46 (helB1) of Dictyostelium discoideum (Social amoeba).